The following is a 345-amino-acid chain: N-acetyl-gamma-glutamyl-phosphate reductase (345 aa).

C149 is a catalytic residue.

The protein belongs to the NAGSA dehydrogenase family. Type 1 subfamily.

Its subcellular location is the cytoplasm. It catalyses the reaction N-acetyl-L-glutamate 5-semialdehyde + phosphate + NADP(+) = N-acetyl-L-glutamyl 5-phosphate + NADPH + H(+). It participates in amino-acid biosynthesis; L-arginine biosynthesis; N(2)-acetyl-L-ornithine from L-glutamate: step 3/4. Its function is as follows. Catalyzes the NADPH-dependent reduction of N-acetyl-5-glutamyl phosphate to yield N-acetyl-L-glutamate 5-semialdehyde. In Geobacillus sp. (strain WCH70), this protein is N-acetyl-gamma-glutamyl-phosphate reductase.